The following is a 415-amino-acid chain: UDP-N-acetylmuramoylalanine--D-glutamate ligase (415 aa).

Position 91–97 (91–97 (GTDGKST)) interacts with ATP.

This sequence belongs to the MurCDEF family.

It is found in the cytoplasm. The enzyme catalyses UDP-N-acetyl-alpha-D-muramoyl-L-alanine + D-glutamate + ATP = UDP-N-acetyl-alpha-D-muramoyl-L-alanyl-D-glutamate + ADP + phosphate + H(+). It functions in the pathway cell wall biogenesis; peptidoglycan biosynthesis. Its function is as follows. Cell wall formation. Catalyzes the addition of glutamate to the nucleotide precursor UDP-N-acetylmuramoyl-L-alanine (UMA). This chain is UDP-N-acetylmuramoylalanine--D-glutamate ligase, found in Aquifex aeolicus (strain VF5).